The following is a 305-amino-acid chain: tRNA pseudouridine synthase B (305 aa).

The active-site Nucleophile is aspartate 39.

This sequence belongs to the pseudouridine synthase TruB family. Type 1 subfamily.

It catalyses the reaction uridine(55) in tRNA = pseudouridine(55) in tRNA. Functionally, responsible for synthesis of pseudouridine from uracil-55 in the psi GC loop of transfer RNAs. The sequence is that of tRNA pseudouridine synthase B from Staphylococcus aureus (strain MRSA252).